The following is a 294-amino-acid chain: Phosphonoacetaldehyde hydrolase (294 aa).

The Nucleophile role is filled by Asp19. Residues Asp19 and Ala21 each contribute to the Mg(2+) site. Lys60 functions as the Schiff-base intermediate with substrate in the catalytic mechanism. Residue Asp193 participates in Mg(2+) binding.

It belongs to the HAD-like hydrolase superfamily. PhnX family. In terms of assembly, homodimer. It depends on Mg(2+) as a cofactor.

It catalyses the reaction phosphonoacetaldehyde + H2O = acetaldehyde + phosphate + H(+). Involved in phosphonate degradation. The chain is Phosphonoacetaldehyde hydrolase from Hahella chejuensis (strain KCTC 2396).